The sequence spans 729 residues: Neurochondrin (729 aa).

N-acetylserine is present on Ser-2. Ser-2 is subject to Phosphoserine. 2 S-palmitoyl cysteine lipidation sites follow: Cys-3 and Cys-4. Arg-75 bears the Asymmetric dimethylarginine mark. The residue at position 448 (Ser-448) is a Phosphoserine.

The protein belongs to the neurochondrin family. In terms of assembly, interacts with MCHR1. Interacts with SEMA4C. Interacts with DIAPH1 (via FH3 domain). Interacts with GRM5. Post-translationally, palmitoylated. Palmitoylation by ZDHHC1, ZDHHC3 and ZDHHC11 regulates the association of NCDN with endosome membranes. May also be palmitoylated by ZDHHC7. In terms of tissue distribution, expressed in brain and in peripheral nervous system (at protein level). Weakly expressed in neurites.

It is found in the cytoplasm. The protein resides in the cytosol. The protein localises to the endosome membrane. It localises to the cell projection. Its subcellular location is the dendrite. It is found in the postsynapse. Functionally, probably involved in signal transduction, in the nervous system, via increasing cell surface localization of GRM5 and positively regulating its signaling. Required for the spatial learning process. Acts as a negative regulator of Ca(2+)-calmodulin-dependent protein kinase 2 (CaMK2) phosphorylation. May play a role in modulating melanin-concentrating hormone-mediated functions via its interaction with MCHR1 that interferes with G protein-coupled signal transduction. May be involved in bone metabolism. May also be involved in neurite outgrowth. In Rattus norvegicus (Rat), this protein is Neurochondrin (Ncdn).